The primary structure comprises 384 residues: Probable peptidoglycan glycosyltransferase FtsW (384 aa).

Topologically, residues 1–19 are cytoplasmic; that stretch reads MAAVWRWFVPERPSFYDRG. The helical transmembrane segment at 20–40 threads the bilayer; it reads LLALTFSLMGIGLMMVASASI. The Periplasmic portion of the chain corresponds to 41–54; it reads KEGPGGDMFYFTKR. Residues 55-75 traverse the membrane as a helical segment; sequence HLIFLFVCLGIGVGTLYLPLE. The Cytoplasmic segment spans residues 76 to 83; sequence RWREWSGR. A helical membrane pass occupies residues 84–104; sequence LLVGALGLLFAVLAVGRTVNG. The Periplasmic portion of the chain corresponds to 105-110; it reads AKRWIG. A helical membrane pass occupies residues 111–131; the sequence is FGFFNIQPAELAKLALIVFIA. Topologically, residues 132–143 are cytoplasmic; it reads SYLVRRSDEVRG. The chain crosses the membrane as a helical span at residues 144-164; the sequence is NIAGFVKPLAVVFLLAIMLLA. At 165–166 the chain is on the periplasmic side; that stretch reads QP. A helical transmembrane segment spans residues 167-187; the sequence is DLGSVVVLFVCTFGLLFIGGA. Position 188 (lysine 188) is a topological domain, cytoplasmic. The helical transmembrane segment at 189-209 threads the bilayer; that stretch reads LVQFIAIIVAGLSALAGLIIY. Over 210-267 the chain is Periplasmic; sequence EPYRLRRVTSFLDPWADPFGSGYQLTQSLMAFGRGGFFGQGLGNSVQKLSYLPEAHTD. The helical transmembrane segment at 268–288 threads the bilayer; it reads FVFAILGEELGYFGVLVVLFL. Over 289 to 316 the chain is Cytoplasmic; the sequence is QLLLAMKALQIGRTALLRSKFFEGYMAC. A helical membrane pass occupies residues 317-337; the sequence is GIGIWFSFQTVVNVGAAAGML. The Periplasmic portion of the chain corresponds to 338-343; sequence PTKGLT. The helical transmembrane segment at 344-364 threads the bilayer; sequence LPLVSYGGSSLIAITMAVAIL. Topologically, residues 365–384 are cytoplasmic; it reads LRIDFERRLDTSHVIQREAA.

It belongs to the SEDS family. FtsW subfamily.

The protein resides in the cell inner membrane. The catalysed reaction is [GlcNAc-(1-&gt;4)-Mur2Ac(oyl-L-Ala-gamma-D-Glu-L-Lys-D-Ala-D-Ala)](n)-di-trans,octa-cis-undecaprenyl diphosphate + beta-D-GlcNAc-(1-&gt;4)-Mur2Ac(oyl-L-Ala-gamma-D-Glu-L-Lys-D-Ala-D-Ala)-di-trans,octa-cis-undecaprenyl diphosphate = [GlcNAc-(1-&gt;4)-Mur2Ac(oyl-L-Ala-gamma-D-Glu-L-Lys-D-Ala-D-Ala)](n+1)-di-trans,octa-cis-undecaprenyl diphosphate + di-trans,octa-cis-undecaprenyl diphosphate + H(+). Its pathway is cell wall biogenesis; peptidoglycan biosynthesis. Functionally, peptidoglycan polymerase that is essential for cell division. In Tolumonas auensis (strain DSM 9187 / NBRC 110442 / TA 4), this protein is Probable peptidoglycan glycosyltransferase FtsW.